Consider the following 363-residue polypeptide: Peptide chain release factor 2 (363 aa).

At Gln251 the chain carries N5-methylglutamine.

Belongs to the prokaryotic/mitochondrial release factor family. Post-translationally, methylated by PrmC. Methylation increases the termination efficiency of RF2.

Its subcellular location is the cytoplasm. Peptide chain release factor 2 directs the termination of translation in response to the peptide chain termination codons UGA and UAA. This is Peptide chain release factor 2 (prfB) from Helicobacter pylori (strain ATCC 700392 / 26695) (Campylobacter pylori).